The primary structure comprises 1720 residues: 6-methylcalicylic acide synthase (1720 aa).

Residues 1–31 (MDKQSASGEIPAMRWEPYHRRDPRNAKELSK) form a disordered region. Residues 1–399 (MDKQSASGEI…GTVSHAVIEQ (399 aa)) enclose the Ketosynthase family 3 (KS3) domain. Over residues 16–30 (EPYHRRDPRNAKELS) the composition is skewed to basic and acidic residues. Active-site for beta-ketoacyl synthase activity residues include Cys-146, His-281, and His-321. Residues 509–823 (VWVFSGHGAQ…IAQLHCRGAE (315 aa)) are malonyl-CoA:ACP transacylase (MAT) domain. The N-terminal hotdog fold stretch occupies residues 868–987 (HTLLGQRIGI…AYWARDIQEA (120 aa)). A dehydratase (DH) domain region spans residues 868-1139 (HTLLGQRIGI…FTAMRFSEIE (272 aa)). A PKS/mFAS DH domain is found at 868-1144 (HTLLGQRIGI…FSEIEGTPGV (277 aa)). His-900 functions as the Proton acceptor; for dehydratase activity in the catalytic mechanism. Residues 1001-1144 (GTRIRDDFSI…FSEIEGTPGV (144 aa)) are C-terminal hotdog fold. Asp-1065 functions as the Proton donor; for dehydratase activity in the catalytic mechanism. The segment at 1148 to 1545 (MESLVHQLAW…AVAVQWTSWR (398 aa)) is product template (PT) domain. Positions 1644–1718 (VYLDEKIRGC…HLVGWFAEKV (75 aa)) constitute a Carrier domain. The residue at position 1678 (Ser-1678) is an O-(pantetheine 4'-phosphoryl)serine.

Its subcellular location is the cytoplasm. The protein localises to the cytosol. The enzyme catalyses 3 malonyl-CoA + acetyl-CoA + NADPH + 3 H(+) = 6-methylsalicylate + 3 CO2 + NADP(+) + 4 CoA + H2O. It participates in mycotoxin biosynthesis; patulin biosynthesis. In terms of biological role, 6-methylsalicylic acid synthase; part of the gene cluster that mediates the biosynthesis of patulin, an acetate-derived tetraketide mycotoxin produced by several fungal species that shows antimicrobial properties against several bacteria. PatK catalyzes the first step of the pathway which is the synthesis of 6-methylsalicylic acid via condensation of 1 acetate and 3 malonate units. The pathway begins with the synthesis of 6-methylsalicylic acid by the polyketide synthase (PKS) patK via condensation of acetate and malonate units. The 6-methylsalicylic acid decarboxylase patG then catalyzes the decarboxylation of 6-methylsalicylic acid to yield m-cresol (also known as 3-methylphenol). These first reactions occur in the cytosol. The intermediate m-cresol is then transported into the endoplasmic reticulum where the cytochrome P450 monooxygenase patH converts it to m-hydroxybenzyl alcohol, which is further converted to gentisyl alcohol by the cytochrome P450 monooxygenase patI. The oxidoreductases patJ and patO further convert gentisyl alcohol to isoepoxydon in the vacuole. PatN catalyzes then the transformation of isoepoxydon into phyllostine. The cluster protein patF is responsible for the conversion from phyllostine to neopatulin whereas the alcohol dehydrogenase patD converts neopatulin to E-ascladiol. The steps between isoepoxydon and E-ascladiol occur in the cytosol, and E-ascladiol is probably secreted to the extracellular space by one of the cluster-specific transporters patC or patM. Finally, the secreted patulin synthase patE catalyzes the conversion of E-ascladiol to patulin. This chain is 6-methylcalicylic acide synthase, found in Aspergillus clavatus (strain ATCC 1007 / CBS 513.65 / DSM 816 / NCTC 3887 / NRRL 1 / QM 1276 / 107).